A 259-amino-acid polypeptide reads, in one-letter code: Bidirectional sugar transporter SWEET6a (259 aa).

Residues 1–9 are Extracellular-facing; it reads MISPDAARN. Residues 10–30 form a helical membrane-spanning segment; the sequence is VVGIIGNVISFGLFLAPVPTF. Residues 10–98 enclose the MtN3/slv 1 domain; sequence VVGIIGNVIS…IFFLYSPNKK (89 aa). The Cytoplasmic segment spans residues 31-45; it reads WRICKRKDVEEFKAD. A helical membrane pass occupies residues 46 to 66; that stretch reads PYLATLLNCMLWVFYGIPVVH. Residues 67-69 are Extracellular-facing; it reads PNS. A helical membrane pass occupies residues 70–90; it reads ILVVTINGIGLLVEGTYLLIF. The Cytoplasmic segment spans residues 91-103; sequence FLYSPNKKRLRMC. A helical transmembrane segment spans residues 104 to 124; the sequence is AVLGVELVFMLAVILGVLLGA. Topologically, residues 125–131 are extracellular; the sequence is HTHEKRS. A helical transmembrane segment spans residues 132-152; it reads MIVGILCVFFGSIMYFSPLTI. The region spanning 133–216 is the MtN3/slv 2 domain; that stretch reads IVGILCVFFG…LILYACYYRT (84 aa). The Cytoplasmic portion of the chain corresponds to 153–165; the sequence is MGKVIKTKSVEYM. Residues 166 to 186 form a helical membrane-spanning segment; the sequence is PFFLSLVCFLNGVCWTAYALI. Over 187–189 the chain is Extracellular; the sequence is RFD. Residues 190-210 traverse the membrane as a helical segment; the sequence is IYVTIPNGLGALFGAIQLILY. Residues 211–259 lie on the Cytoplasmic side of the membrane; that stretch reads ACYYRTTPKKTKAAKDVEMPSVVVSGTGAAAAAGGGNTGGGSISVTVER.

It belongs to the SWEET sugar transporter family. In terms of assembly, forms homooligomers and/or heterooligomers.

The protein localises to the cell membrane. In terms of biological role, mediates both low-affinity uptake and efflux of sugar across the plasma membrane. The protein is Bidirectional sugar transporter SWEET6a (SWEET6A) of Oryza sativa subsp. indica (Rice).